We begin with the raw amino-acid sequence, 88 residues long: Small ribosomal subunit protein uS15 (88 aa).

The tract at residues 1 to 23 is disordered; sequence MIASSVKAEVVKSNARSANDTGS. A compositionally biased stretch (polar residues) spans 14–23; sequence NARSANDTGS.

Belongs to the universal ribosomal protein uS15 family. Part of the 30S ribosomal subunit. Forms a bridge to the 50S subunit in the 70S ribosome, contacting the 23S rRNA.

Its function is as follows. One of the primary rRNA binding proteins, it binds directly to 16S rRNA where it helps nucleate assembly of the platform of the 30S subunit by binding and bridging several RNA helices of the 16S rRNA. In terms of biological role, forms an intersubunit bridge (bridge B4) with the 23S rRNA of the 50S subunit in the ribosome. The sequence is that of Small ribosomal subunit protein uS15 from Delftia acidovorans (strain DSM 14801 / SPH-1).